The following is an 89-amino-acid chain: Small ribosomal subunit protein uS14A (89 aa).

Belongs to the universal ribosomal protein uS14 family. In terms of assembly, part of the 30S ribosomal subunit. Contacts proteins S3 and S10.

Its function is as follows. Binds 16S rRNA, required for the assembly of 30S particles and may also be responsible for determining the conformation of the 16S rRNA at the A site. The chain is Small ribosomal subunit protein uS14A from Streptococcus agalactiae serotype Ia (strain ATCC 27591 / A909 / CDC SS700).